Reading from the N-terminus, the 168-residue chain is Group IIF secretory phospholipase A2 (168 aa).

An N-terminal signal peptide occupies residues 1-20; it reads MKKFFAIAVLAGSVVTTAHS. 7 disulfides stabilise this stretch: Cys46/Cys138, Cys48/Cys64, Cys63/Cys120, Cys69/Cys145, Cys70/Cys113, Cys79/Cys106, and Cys98/Cys111. Residues Tyr47, Gly49, and Gly51 each contribute to the Ca(2+) site. Residue His67 is part of the active site. Ca(2+) is bound at residue Asp68. Residues Asn92 and Asn102 are each glycosylated (N-linked (GlcNAc...) asparagine). Asp114 is a catalytic residue. Positions 139 to 168 are required for localization on the plasma membrane; sequence QGPTPNCSIYDPYPEEVTCGHGLPATPVST. N-linked (GlcNAc...) asparagine glycosylation occurs at Asn144.

Belongs to the phospholipase A2 family. Ca(2+) is required as a cofactor. In terms of tissue distribution, strongly expressed in testis.

It is found in the secreted. The protein resides in the cell membrane. It catalyses the reaction a 1,2-diacyl-sn-glycero-3-phosphocholine + H2O = a 1-acyl-sn-glycero-3-phosphocholine + a fatty acid + H(+). It carries out the reaction 1-hexadecanoyl-2-(9Z-octadecenoyl)-sn-glycero-3-phospho-(1'-sn-glycerol) + H2O = 1-hexadecanoyl-sn-glycero-3-phospho-(1'-sn-glycerol) + (9Z)-octadecenoate + H(+). The enzyme catalyses 1-hexadecanoyl-2-(9Z,12Z-octadecadienoyl)-sn-glycero-3-phosphoethanolamine + H2O = 1-hexadecanoyl-sn-glycero-3-phosphoethanolamine + (9Z,12Z)-octadecadienoate + H(+). The catalysed reaction is 1-hexadecanoyl-2-(5Z,8Z,11Z,14Z-eicosatetraenoyl)-sn-glycero-3-phosphoethanolamine + H2O = 1-hexadecanoyl-sn-glycero-3-phosphoethanolamine + (5Z,8Z,11Z,14Z)-eicosatetraenoate + H(+). It catalyses the reaction 1-hexadecanoyl-2-(9Z-octadecenoyl)-sn-glycero-3-phosphocholine + H2O = 1-hexadecanoyl-sn-glycero-3-phosphocholine + (9Z)-octadecenoate + H(+). It carries out the reaction 1-hexadecanoyl-2-(9Z-octadecenoyl)-sn-glycero-3-phospho-L-serine + H2O = 1-hexadecanoyl-sn-glycero-3-phospho-L-serine + (9Z)-octadecenoate + H(+). Its function is as follows. Secretory calcium-dependent phospholipase A2 that primarily targets extracellular phospholipids. Hydrolyzes the ester bond of the fatty acyl group attached at the sn-2 position of phospholipids (phospholipase A2 activity), the catalytic efficiency decreasing in the following order: phosphatidylglycerols &gt; phosphatidylethanolamines &gt; phosphatidylcholines &gt; phosphatidylserines. May play a role in lipid mediator production in inflammatory conditions, by providing arachidonic acid to downstream cyclooxygenases and lipoxygenases. The protein is Group IIF secretory phospholipase A2 (Pla2g2f) of Mus musculus (Mouse).